Reading from the N-terminus, the 262-residue chain is MKIALGIEYDGCRYCGWQRQQYVDSVQQRLEEALSVIANSSCEVFCAGRTDAGVHATGQVVHFDTDVNRPMQSWCLGTNAHLPEDIVVKWAIGVSDDFHARFSALARRYRYVIYNNKLRSAILPKGISHYHYSLDHEKMHEAGQFLLGENDFSSFRAAKCQSHTPWRNVHHLIVSRHQDYIILDIQANAFVHHMVRNIVGSLIEVGRGDKPVEWIKWLLEKRDRTLAAPTAKAEGLYLVEVIYPEKFSIPQMPLGPLFYYGK.

Catalysis depends on D51, which acts as the Nucleophile. A substrate-binding site is contributed by Y109.

It belongs to the tRNA pseudouridine synthase TruA family. In terms of assembly, homodimer.

It carries out the reaction uridine(38/39/40) in tRNA = pseudouridine(38/39/40) in tRNA. Its function is as follows. Formation of pseudouridine at positions 38, 39 and 40 in the anticodon stem and loop of transfer RNAs. The chain is tRNA pseudouridine synthase A from Glaesserella parasuis serovar 5 (strain SH0165) (Haemophilus parasuis).